Reading from the N-terminus, the 1142-residue chain is Probable serine/threonine-protein kinase fhkB (1142 aa).

The segment covering 1 to 16 (MSQDIQTQNSYSDELY) has biased composition (polar residues). 3 disordered regions span residues 1–359 (MSQD…RLSQ), 374–404 (NTHT…KKQQ), and 432–451 (QIIG…QPPV). Low complexity-rich tracts occupy residues 17–72 (SSQI…FSQN) and 83–157 (QNSY…PSSQ). Positions 158–178 (KRFFQSQNDDFVPSSQVTSLQ) are enriched in polar residues. Residues 186–302 (IQQQQQQQQQ…DYEQENDDDD (117 aa)) adopt a coiled-coil conformation. The span at 187–260 (QQQQQQQQQQ…QQTQQQQQQP (74 aa)) shows a compositional bias: low complexity. Acidic residues-rich tracts occupy residues 261 to 277 (QEDD…DNYE) and 283 to 325 (EGEE…EEES). Residues 333–348 (RALQSRSSQSRPLLRS) are compositionally biased toward low complexity. A compositionally biased stretch (polar residues) spans 374-397 (NTHTNQLGQSSQQTNSPNVHFNSL). A coiled-coil region spans residues 393–434 (HFNSLQQKKKQQQQQQQQQQQQQQQQQQQQQQQQQQQSQQII). Residues 432 to 443 (QIIGSQSSQSSQ) show a composition bias toward low complexity. One can recognise an FHA domain in the interval 480 to 551 (IVVGRSSSCD…NGSYINGELI (72 aa)). In terms of domain architecture, Protein kinase spans 625-885 (YYFVKEIGSG…IKEALNHPWF (261 aa)). Residues 631–639 (IGSGGYGIV) and K654 contribute to the ATP site. Catalysis depends on D747, which acts as the Proton acceptor. The disordered stretch occupies residues 947 to 1142 (FDNNNNNNNN…HQQYTQHTTM (196 aa)). Residues 949–1034 (NNNNNNNNNN…HNHNLNNHNH (86 aa)) are compositionally biased toward low complexity. The span at 1035 to 1067 (NNNHHHNHNHNHNHNHNHNHNHNHNHNHNHNHN) shows a compositional bias: basic residues. A compositionally biased stretch (low complexity) spans 1068-1133 (NHNNNNNNNN…NNINNNNNYH (66 aa)). Residues 1090–1132 (NNNNNNNNNNNNNNNNNNNNYYNNNINNINNNINNNINNNNNY) adopt a coiled-coil conformation.

This sequence belongs to the protein kinase superfamily. CAMK Ser/Thr protein kinase family. CHK2 subfamily.

The catalysed reaction is L-seryl-[protein] + ATP = O-phospho-L-seryl-[protein] + ADP + H(+). It catalyses the reaction L-threonyl-[protein] + ATP = O-phospho-L-threonyl-[protein] + ADP + H(+). The protein is Probable serine/threonine-protein kinase fhkB (fhkB) of Dictyostelium discoideum (Social amoeba).